Reading from the N-terminus, the 275-residue chain is Urease accessory protein UreD (275 aa).

The protein belongs to the UreD family. UreD, UreF and UreG form a complex that acts as a GTP-hydrolysis-dependent molecular chaperone, activating the urease apoprotein by helping to assemble the nickel containing metallocenter of UreC. The UreE protein probably delivers the nickel.

The protein localises to the cytoplasm. In terms of biological role, required for maturation of urease via the functional incorporation of the urease nickel metallocenter. The protein is Urease accessory protein UreD of Cereibacter sphaeroides (strain ATCC 17025 / ATH 2.4.3) (Rhodobacter sphaeroides).